Consider the following 162-residue polypeptide: Glycine cleavage system H protein, mitochondrial (162 aa).

A mitochondrion-targeting transit peptide spans 1-31 (MALRMWASSTANALRLSSATRPHFSPLSRCF). A Lipoyl-binding domain is found at 53 to 135 (VATIGITDHA…YEDGWMIKVK (83 aa)). K94 is modified (N6-lipoyllysine).

Belongs to the GcvH family. The glycine cleavage system is composed of four proteins: P, T, L and H. (R)-lipoate is required as a cofactor.

The protein localises to the mitochondrion. In terms of biological role, the glycine cleavage system catalyzes the degradation of glycine. The H protein shuttles the methylamine group of glycine from the P protein to the T protein. This chain is Glycine cleavage system H protein, mitochondrial (GDCSH), found in Flaveria anomala (Yellowtops).